The sequence spans 163 residues: Type VII secretion system protein EsaG (163 aa).

As to quaternary structure, interacts with EssD (via C-terminus). Interacts with EssE.

It localises to the cytoplasm. Component of the type VII secretion system (Ess). Also acts as part of toxin-antitoxin system. Counteracts the toxic effect of EssD via direct interaction. The protein is Type VII secretion system protein EsaG of Staphylococcus aureus (strain NCTC 8325 / PS 47).